Reading from the N-terminus, the 111-residue chain is MAQRVTYRRRLAYNTRSNKTRIIKTPGNNIRYLHIKKLGTIPRCGDTGVPLQGIPALRPREFARLSHNQKKVQRAYGGCLSANAVKDRIVRAFLIEEQKIVKQKLKQMSQK.

Y76 carries the post-translational modification Phosphotyrosine.

Belongs to the eukaryotic ribosomal protein eL34 family. In terms of assembly, component of the large ribosomal subunit (LSU). Mature yeast ribosomes consist of a small (40S) and a large (60S) subunit. The 40S small subunit contains 1 molecule of ribosomal RNA (18S rRNA) and at least 33 different proteins. The large 60S subunit contains 3 rRNA molecules (25S, 5.8S and 5S rRNA) and at least 46 different proteins.

It localises to the cytoplasm. The protein localises to the nucleus. It is found in the nucleolus. Functionally, component of the ribosome, a large ribonucleoprotein complex responsible for the synthesis of proteins in the cell. The small ribosomal subunit (SSU) binds messenger RNAs (mRNAs) and translates the encoded message by selecting cognate aminoacyl-transfer RNA (tRNA) molecules. The large subunit (LSU) contains the ribosomal catalytic site termed the peptidyl transferase center (PTC), which catalyzes the formation of peptide bonds, thereby polymerizing the amino acids delivered by tRNAs into a polypeptide chain. The nascent polypeptides leave the ribosome through a tunnel in the LSU and interact with protein factors that function in enzymatic processing, targeting, and the membrane insertion of nascent chains at the exit of the ribosomal tunnel. The chain is Large ribosomal subunit protein eL34B (rpl3402) from Schizosaccharomyces pombe (strain 972 / ATCC 24843) (Fission yeast).